Consider the following 972-residue polypeptide: Macrophage colony-stimulating factor 1 receptor (972 aa).

An N-terminal signal peptide occupies residues 1–19 (MGPGVLLLLLVATAWHGQG). Residues 20 to 517 (IPVIEPSVPE…HPPDEFLFTP (498 aa)) are Extracellular-facing. Ig-like C2-type domains are found at residues 21-104 (PVIE…VKDP), 107-197 (PWNV…KVQK), 203-290 (PALT…HSTS), 299-399 (AYLN…LTLR), and 402-502 (PEVS…IPIS). 3 cysteine pairs are disulfide-bonded: C42-C84, C127-C177, and C224-C278. N-linked (GlcNAc...) asparagine glycans are attached at residues N45, N73, N153, N240, N275, N302, N335, N353, N412, N428, and N480. A disulfide bridge connects residues C419 and C485. A helical transmembrane segment spans residues 518 to 538 (VVVACMSIMALLLLLLLLLLY). The Cytoplasmic segment spans residues 539 to 972 (KYKQKPKYQV…LLQPNNYQFC (434 aa)). The interval 542 to 574 (QKPKYQVRWKIIESYEGNSYTFIDPTQLPYNEK) is regulatory juxtamembrane domain. Residues Y546 and Y561 each carry the phosphotyrosine; by autocatalysis modification. The region spanning 582–910 (LQFGKTLGAG…PTFQQICSFL (329 aa)) is the Protein kinase domain. ATP is bound by residues 588–596 (LGAGAFGKV) and K616. Phosphotyrosine; by autocatalysis occurs at positions 699 and 708. S713 is subject to Phosphoserine. Y723 bears the Phosphotyrosine; by autocatalysis mark. Residue D778 is the Proton acceptor of the active site. Residues 796–818 (DFGLARDIMNDSNYIVKGNARLP) are activation loop. Phosphotyrosine; by autocatalysis occurs at positions 809 and 923. The segment at 918–950 (RRERDYTNLPSSSRSGGSGSSSSELEEESSSEH) is disordered. Residues 928–940 (SSSRSGGSGSSSS) show a composition bias toward low complexity. Y969 bears the Phosphotyrosine; by autocatalysis mark.

The protein belongs to the protein kinase superfamily. Tyr protein kinase family. CSF-1/PDGF receptor subfamily. As to quaternary structure, interacts with INPPL1/SHIP2 and THOC5. Monomer. Homodimer. Interacts with CSF1 and IL34. Interaction with dimeric CSF1 or IL34 leads to receptor homodimerization. Interacts (tyrosine phosphorylated) with PLCG2 (via SH2 domain). Interacts (tyrosine phosphorylated) with PIK3R1 (via SH2 domain). Interacts (tyrosine phosphorylated) with FYN, YES1 and SRC (via SH2 domain). Interacts (tyrosine phosphorylated) with CBL, GRB2 and SLA2. Autophosphorylated in response to CSF1 or IL34 binding. Phosphorylation at Tyr-561 is important for normal down-regulation of signaling by ubiquitination, internalization and degradation. Phosphorylation at Tyr-561 and Tyr-809 is important for interaction with SRC family members, including FYN, YES1 and SRC, and for subsequent activation of these protein kinases. Phosphorylation at Tyr-699 and Tyr-923 is important for interaction with GRB2. Phosphorylation at Tyr-723 is important for interaction with PIK3R1. Phosphorylation at Tyr-708 is important for normal receptor degradation. Phosphorylation at Tyr-723 and Tyr-809 is important for interaction with PLCG2. Phosphorylation at Tyr-969 is important for interaction with CBL. Dephosphorylation by PTPN2 negatively regulates downstream signaling and macrophage differentiation. Post-translationally, ubiquitinated. Becomes rapidly polyubiquitinated after autophosphorylation, leading to its degradation. As to expression, expressed in bone marrow and in differentiated blood mononuclear cells.

It localises to the cell membrane. The catalysed reaction is L-tyrosyl-[protein] + ATP = O-phospho-L-tyrosyl-[protein] + ADP + H(+). Its activity is regulated as follows. Present in an inactive conformation in the absence of bound ligand. CSF1 or IL34 binding leads to dimerization and activation by autophosphorylation on tyrosine residues. Inhibited by imatinib/STI-571 (Gleevec), dasatinib, sunitinib/SU11248, lestaurtinib/CEP-701, midostaurin/PKC-412, Ki20227, linifanib/ABT-869, Axitinib/AG013736, sorafenib/BAY 43-9006 and GW2580. Functionally, tyrosine-protein kinase that acts as a cell-surface receptor for CSF1 and IL34 and plays an essential role in the regulation of survival, proliferation and differentiation of hematopoietic precursor cells, especially mononuclear phagocytes, such as macrophages and monocytes. Promotes the release of pro-inflammatory chemokines in response to IL34 and CSF1, and thereby plays an important role in innate immunity and in inflammatory processes. Plays an important role in the regulation of osteoclast proliferation and differentiation, the regulation of bone resorption, and is required for normal bone and tooth development. Required for normal male and female fertility, and for normal development of milk ducts and acinar structures in the mammary gland during pregnancy. Promotes reorganization of the actin cytoskeleton, regulates formation of membrane ruffles, cell adhesion and cell migration, and promotes cancer cell invasion. Activates several signaling pathways in response to ligand binding, including the ERK1/2 and the JNK pathway. Phosphorylates PIK3R1, PLCG2, GRB2, SLA2 and CBL. Activation of PLCG2 leads to the production of the cellular signaling molecules diacylglycerol and inositol 1,4,5-trisphosphate, that then lead to the activation of protein kinase C family members, especially PRKCD. Phosphorylation of PIK3R1, the regulatory subunit of phosphatidylinositol 3-kinase, leads to activation of the AKT1 signaling pathway. Activated CSF1R also mediates activation of the MAP kinases MAPK1/ERK2 and/or MAPK3/ERK1, and of the SRC family kinases SRC, FYN and YES1. Activated CSF1R transmits signals both via proteins that directly interact with phosphorylated tyrosine residues in its intracellular domain, or via adapter proteins, such as GRB2. Promotes activation of STAT family members STAT3, STAT5A and/or STAT5B. Promotes tyrosine phosphorylation of SHC1 and INPP5D/SHIP-1. Receptor signaling is down-regulated by protein phosphatases, such as INPP5D/SHIP-1, that dephosphorylate the receptor and its downstream effectors, and by rapid internalization of the activated receptor. In the central nervous system, may play a role in the development of microglia macrophages. This is Macrophage colony-stimulating factor 1 receptor (CSF1R) from Homo sapiens (Human).